We begin with the raw amino-acid sequence, 77 residues long: Translation initiation factor IF-1, chloroplastic (77 aa).

Positions 1 to 71 (MKEQKWTHEG…TRGRIIYRLR (71 aa)) constitute an S1-like domain.

The protein belongs to the IF-1 family. As to quaternary structure, component of the 30S ribosomal translation pre-initiation complex which assembles on the 30S ribosome in the order IF-2 and IF-3, IF-1 and N-formylmethionyl-tRNA(fMet); mRNA recruitment can occur at any time during PIC assembly.

It is found in the plastid. It localises to the chloroplast. Functionally, one of the essential components for the initiation of protein synthesis. Stabilizes the binding of IF-2 and IF-3 on the 30S subunit to which N-formylmethionyl-tRNA(fMet) subsequently binds. Helps modulate mRNA selection, yielding the 30S pre-initiation complex (PIC). Upon addition of the 50S ribosomal subunit IF-1, IF-2 and IF-3 are released leaving the mature 70S translation initiation complex. The chain is Translation initiation factor IF-1, chloroplastic from Coffea arabica (Arabian coffee).